Consider the following 1060-residue polypeptide: Protocadherin-1 (1060 aa).

Residues 1-57 (MDSGAGGRRCPEAALLILGPPRMEHLRHSPGPGGQRLLLPSMLLALLLLLAPSPGHA) form the signal peptide. 7 Cadherin domains span residues 58 to 168 (TRVV…TPNF), 169 to 280 (ASPV…APKF), 281 to 387 (ERPS…APTI), 396 to 506 (THQD…APVF), 507 to 612 (TQSV…DPKF), 613 to 715 (MLSG…APYI), and 718 to 844 (PSNT…DPEY). Over 58–852 (TRVVYKVPEE…EYERSKQRGN (795 aa)) the chain is Extracellular. N-linked (GlcNAc...) asparagine glycans are attached at residues Asn305 and Asn403. 4 N-linked (GlcNAc...) asparagine glycosylation sites follow: Asn618, Asn662, Asn813, and Asn818. A helical transmembrane segment spans residues 853–873 (ILFGVVAGVVAVALLIALAVL). At 874 to 1060 (VRYCRQREAK…HGAIWTEVWE (187 aa)) the chain is on the cytoplasmic side. Residues 884 to 897 (SGYQAGKKETKDLY) show a composition bias toward basic and acidic residues. The interval 884 to 1045 (SGYQAGKKET…QPFQLSTPQP (162 aa)) is disordered. Residues 907 to 920 (KGNKSKGKKSKSPK) show a composition bias toward basic residues. 4 positions are modified to phosphoserine: Ser918, Ser949, Ser962, and Ser984. Over residues 973–986 (SPLPSIQLQPQSPS) the composition is skewed to low complexity. 2 stretches are compositionally biased toward polar residues: residues 1003–1024 (FVGT…SYRT) and 1033–1043 (QVGQPFQLSTP).

In terms of tissue distribution, highly expressed in the brain and neuro-glial cells.

It is found in the cell junction. It localises to the cell membrane. In terms of biological role, may be involved in cell-cell interaction processes and in cell adhesion. The sequence is that of Protocadherin-1 (PCDH1) from Homo sapiens (Human).